The primary structure comprises 83 residues: Exodeoxyribonuclease 7 small subunit (83 aa).

The protein belongs to the XseB family. In terms of assembly, heterooligomer composed of large and small subunits.

The protein localises to the cytoplasm. The enzyme catalyses Exonucleolytic cleavage in either 5'- to 3'- or 3'- to 5'-direction to yield nucleoside 5'-phosphates.. In terms of biological role, bidirectionally degrades single-stranded DNA into large acid-insoluble oligonucleotides, which are then degraded further into small acid-soluble oligonucleotides. In Afipia carboxidovorans (strain ATCC 49405 / DSM 1227 / KCTC 32145 / OM5) (Oligotropha carboxidovorans), this protein is Exodeoxyribonuclease 7 small subunit.